Here is a 424-residue protein sequence, read N- to C-terminus: Arginine ADP-riboxanase OspC4 (424 aa).

NAD(+) is bound by residues histidine 85, glutamine 86, serine 87, leucine 91, isoleucine 104, asparagine 114, phenylalanine 130, histidine 148, phenylalanine 153, aspartate 173, and glutamate 268. Residue glutamate 268 is part of the active site. 3 ANK repeats span residues methionine 311–glutamine 340, asparagine 355–lysine 386, and serine 393–glutamine 422.

It belongs to the OspC family.

The protein resides in the secreted. Its subcellular location is the host cytoplasm. It carries out the reaction L-arginyl-[protein] + NAD(+) = ADP-riboxanated L-argininyl-[protein] + nicotinamide + NH4(+) + H(+). ADP-riboxanase effector that mediates arginine ADP-riboxanation of host caspase CASP4/CASP11, thereby inhibiting pyroptosis. This is Arginine ADP-riboxanase OspC4 from Shigella flexneri.